The following is a 163-amino-acid chain: MRPLNDYLNSFLFTELLRGLRLTARHMVFRRSITLEFPEERAPKSPRFRGHLALRRYPNGEERCIACKLCEAVCPALAITIDSHQRADGTRRTTRYDIDMFKCIYCGFCEESCPVDSIVLTRLDTFHMERRDERVADKQKLLAMGDKYESQLAADRAADAPYR.

2 4Fe-4S ferredoxin-type domains span residues 54–84 and 94–123; these read LRRYPNGEERCIACKLCEAVCPALAITIDSH and TRYDIDMFKCIYCGFCEESCPVDSIVLTRL. [4Fe-4S] cluster contacts are provided by cysteine 64, cysteine 67, cysteine 70, cysteine 74, cysteine 103, cysteine 106, cysteine 109, and cysteine 113.

The protein belongs to the complex I 23 kDa subunit family. As to quaternary structure, NDH-1 is composed of 14 different subunits. Subunits NuoA, H, J, K, L, M, N constitute the membrane sector of the complex. [4Fe-4S] cluster is required as a cofactor.

Its subcellular location is the cell inner membrane. The enzyme catalyses a quinone + NADH + 5 H(+)(in) = a quinol + NAD(+) + 4 H(+)(out). Functionally, NDH-1 shuttles electrons from NADH, via FMN and iron-sulfur (Fe-S) centers, to quinones in the respiratory chain. The immediate electron acceptor for the enzyme in this species is believed to be ubiquinone. Couples the redox reaction to proton translocation (for every two electrons transferred, four hydrogen ions are translocated across the cytoplasmic membrane), and thus conserves the redox energy in a proton gradient. The protein is NADH-quinone oxidoreductase subunit I of Halorhodospira halophila (strain DSM 244 / SL1) (Ectothiorhodospira halophila (strain DSM 244 / SL1)).